A 401-amino-acid polypeptide reads, in one-letter code: Proline-rich protein 30 (401 aa).

A compositionally biased stretch (polar residues) spans Pro69 to Asp80. Disordered stretches follow at residues Pro69–Ser93, Ser129–Gly191, and Gln357–Ser401. 2 stretches are compositionally biased toward low complexity: residues Pro83–Ser93 and Ser129–Ser147. 2 stretches are compositionally biased toward polar residues: residues Arg148–Ser186 and Gln357–Leu368.

This chain is Proline-rich protein 30 (Prr30), found in Mus musculus (Mouse).